A 184-amino-acid chain; its full sequence is NADH-quinone oxidoreductase subunit B (184 aa).

4 residues coordinate [4Fe-4S] cluster: Cys-63, Cys-64, Cys-128, and Cys-158.

It belongs to the complex I 20 kDa subunit family. NDH-1 is composed of 14 different subunits. Subunits NuoB, C, D, E, F, and G constitute the peripheral sector of the complex. It depends on [4Fe-4S] cluster as a cofactor.

It is found in the cell inner membrane. The catalysed reaction is a quinone + NADH + 5 H(+)(in) = a quinol + NAD(+) + 4 H(+)(out). Functionally, NDH-1 shuttles electrons from NADH, via FMN and iron-sulfur (Fe-S) centers, to quinones in the respiratory chain. The immediate electron acceptor for the enzyme in this species is believed to be ubiquinone. Couples the redox reaction to proton translocation (for every two electrons transferred, four hydrogen ions are translocated across the cytoplasmic membrane), and thus conserves the redox energy in a proton gradient. This chain is NADH-quinone oxidoreductase subunit B, found in Xanthomonas oryzae pv. oryzae (strain MAFF 311018).